A 504-amino-acid polypeptide reads, in one-letter code: 26S proteasome non-ATPase regulatory subunit 5 (504 aa).

Ala2 carries the post-translational modification N-acetylalanine.

This sequence belongs to the proteasome subunit S5B/HSM3 family. In terms of assembly, interacts with PSMC1, PSMC2, PSMD1 and PSMD6. Part of transient complex containing PSMD5, PSMC2, PSMC1 and PSMD2 formed during the assembly of the 26S proteasome.

In terms of biological role, acts as a chaperone during the assembly of the 26S proteasome, specifically of the base subcomplex of the PA700/19S regulatory complex (RC). In the initial step of the base subcomplex assembly is part of an intermediate PSMD5:PSMC2:PSMC1:PSMD2 module which probably assembles with a PSMD10:PSMC4:PSMC5:PAAF1 module followed by dissociation of PSMD5. This is 26S proteasome non-ATPase regulatory subunit 5 (PSMD5) from Homo sapiens (Human).